The following is a 621-amino-acid chain: tRNA uridine 5-carboxymethylaminomethyl modification enzyme MnmG (621 aa).

Residue 17 to 22 (GGGHAG) participates in FAD binding. Position 276–290 (276–290 (GPRYCPSIEDKIMKF)) interacts with NAD(+).

The protein belongs to the MnmG family. As to quaternary structure, homodimer. Heterotetramer of two MnmE and two MnmG subunits. It depends on FAD as a cofactor.

Its subcellular location is the cytoplasm. Its function is as follows. NAD-binding protein involved in the addition of a carboxymethylaminomethyl (cmnm) group at the wobble position (U34) of certain tRNAs, forming tRNA-cmnm(5)s(2)U34. In Zymomonas mobilis subsp. mobilis (strain ATCC 31821 / ZM4 / CP4), this protein is tRNA uridine 5-carboxymethylaminomethyl modification enzyme MnmG.